A 291-amino-acid polypeptide reads, in one-letter code: Pyridoxal 5'-phosphate synthase subunit PdxS (291 aa).

Position 23 (aspartate 23) interacts with D-ribose 5-phosphate. Lysine 80 acts as the Schiff-base intermediate with D-ribose 5-phosphate in catalysis. Glycine 152 is a binding site for D-ribose 5-phosphate. Arginine 164 contacts D-glyceraldehyde 3-phosphate. D-ribose 5-phosphate is bound by residues glycine 213 and glycine 234–serine 235.

This sequence belongs to the PdxS/SNZ family. In terms of assembly, in the presence of PdxT, forms a dodecamer of heterodimers.

The catalysed reaction is aldehydo-D-ribose 5-phosphate + D-glyceraldehyde 3-phosphate + L-glutamine = pyridoxal 5'-phosphate + L-glutamate + phosphate + 3 H2O + H(+). The protein operates within cofactor biosynthesis; pyridoxal 5'-phosphate biosynthesis. Catalyzes the formation of pyridoxal 5'-phosphate from ribose 5-phosphate (RBP), glyceraldehyde 3-phosphate (G3P) and ammonia. The ammonia is provided by the PdxT subunit. Can also use ribulose 5-phosphate and dihydroxyacetone phosphate as substrates, resulting from enzyme-catalyzed isomerization of RBP and G3P, respectively. This Streptococcus pneumoniae (strain P1031) protein is Pyridoxal 5'-phosphate synthase subunit PdxS.